Here is a 329-residue protein sequence, read N- to C-terminus: CDP-6-deoxy-L-threo-D-glycero-4-hexulose-3-dehydrase reductase (329 aa).

The 92-residue stretch at serine 2–leucine 93 folds into the 2Fe-2S ferredoxin-type domain. Residues cysteine 37, cysteine 42, cysteine 45, and cysteine 75 each contribute to the [2Fe-2S] cluster site. One can recognise an FAD-binding FR-type domain in the interval lysine 98–arginine 197.

Monomer.

Its pathway is nucleotide-sugar biosynthesis; CDP-ascarylose biosynthesis. It participates in bacterial outer membrane biogenesis; lipopolysaccharide biosynthesis. Participates in the conversion of CDP-6-deoxy-D-glycero-L-threo-4-hexulose to 3,6-dideoxy-D-glycero-D-glycero-4-hexulose together with CDP-6-deoxy-D-glycero-L-threo-4-hexulose-3-dehydrase (E1) in two consecutive steps. The detailed mechanism of E3 is not yet resolved. The protein is CDP-6-deoxy-L-threo-D-glycero-4-hexulose-3-dehydrase reductase (ascD) of Yersinia pseudotuberculosis serotype I (strain IP32953).